Reading from the N-terminus, the 291-residue chain is N-acetylmannosamine kinase (291 aa).

ATP contacts are provided by residues 5–12 (AIDIGGTK) and 132–139 (GVGGGVVC). Positions 156, 166, 168, and 173 each coordinate Zn(2+).

The protein belongs to the ROK (NagC/XylR) family. NanK subfamily. As to quaternary structure, homodimer.

It catalyses the reaction an N-acyl-D-mannosamine + ATP = an N-acyl-D-mannosamine 6-phosphate + ADP + H(+). Its pathway is amino-sugar metabolism; N-acetylneuraminate degradation; D-fructose 6-phosphate from N-acetylneuraminate: step 2/5. In terms of biological role, catalyzes the phosphorylation of N-acetylmannosamine (ManNAc) to ManNAc-6-P. The chain is N-acetylmannosamine kinase from Salmonella typhi.